A 242-amino-acid chain; its full sequence is Anthranilate phosphoribosyltransferase (242 aa).

Residues glycine 79, 82-83 (GD), threonine 87, 89-92 (NVST), 107-115 (KHGNRAVSS), and serine 119 each bind 5-phospho-alpha-D-ribose 1-diphosphate. Glycine 79 contacts anthranilate. Serine 91 lines the Mg(2+) pocket. Asparagine 110 is a binding site for anthranilate. Arginine 165 provides a ligand contact to anthranilate. 2 residues coordinate Mg(2+): aspartate 224 and glutamate 225.

Belongs to the anthranilate phosphoribosyltransferase family. As to quaternary structure, homodimer. It depends on Mg(2+) as a cofactor.

It carries out the reaction N-(5-phospho-beta-D-ribosyl)anthranilate + diphosphate = 5-phospho-alpha-D-ribose 1-diphosphate + anthranilate. Its pathway is amino-acid biosynthesis; L-tryptophan biosynthesis; L-tryptophan from chorismate: step 2/5. Its function is as follows. Catalyzes the transfer of the phosphoribosyl group of 5-phosphorylribose-1-pyrophosphate (PRPP) to anthranilate to yield N-(5'-phosphoribosyl)-anthranilate (PRA). The sequence is that of Anthranilate phosphoribosyltransferase (trpD) from Bacillus caldotenax.